The sequence spans 356 residues: Phosphate acyltransferase (356 aa).

It belongs to the PlsX family. In terms of assembly, homodimer. Probably interacts with PlsY.

The protein resides in the cytoplasm. It catalyses the reaction a fatty acyl-[ACP] + phosphate = an acyl phosphate + holo-[ACP]. The protein operates within lipid metabolism; phospholipid metabolism. In terms of biological role, catalyzes the reversible formation of acyl-phosphate (acyl-PO(4)) from acyl-[acyl-carrier-protein] (acyl-ACP). This enzyme utilizes acyl-ACP as fatty acyl donor, but not acyl-CoA. This chain is Phosphate acyltransferase, found in Escherichia coli (strain 55989 / EAEC).